Consider the following 353-residue polypeptide: Nicotinate-nucleotide--dimethylbenzimidazole phosphoribosyltransferase (353 aa).

The active-site Proton acceptor is Glu-318.

The protein belongs to the CobT family.

It carries out the reaction 5,6-dimethylbenzimidazole + nicotinate beta-D-ribonucleotide = alpha-ribazole 5'-phosphate + nicotinate + H(+). The protein operates within nucleoside biosynthesis; alpha-ribazole biosynthesis; alpha-ribazole from 5,6-dimethylbenzimidazole: step 1/2. Functionally, catalyzes the synthesis of alpha-ribazole-5'-phosphate from nicotinate mononucleotide (NAMN) and 5,6-dimethylbenzimidazole (DMB). This chain is Nicotinate-nucleotide--dimethylbenzimidazole phosphoribosyltransferase, found in Desulforudis audaxviator (strain MP104C).